We begin with the raw amino-acid sequence, 471 residues long: 5-hydroxytryptamine receptor 2A (471 aa).

Residues 1–80 (MEILCEDNTS…LQEKNWSALL (80 aa)) lie on the Extracellular side of the membrane. Asn-8, Asn-38, Asn-44, Asn-51, and Asn-54 each carry an N-linked (GlcNAc...) asparagine glycan. A helical transmembrane segment spans residues 81–97 (TAVVIILTIAGNILVIM). Topologically, residues 98–111 (AVSLEKKLQNATNY) are cytoplasmic. Residues 112–137 (FLMSLAIADMLLGFLVMPVSMLTILY) traverse the membrane as a helical segment. At 138 to 146 (GYRWPLPSK) the chain is on the extracellular side. A helical transmembrane segment spans residues 147 to 171 (LCAVWIYLDVLFSTASIMHLCAISL). Cys-148 and Cys-227 are oxidised to a cystine. Asp-155 provides a ligand contact to serotonin. A DRY motif; important for ligand-induced conformation changes motif is present at residues 172 to 174 (DRY). The Cytoplasmic segment spans residues 172-191 (DRYVAIQNPIHHSRFNSRTK). A helical transmembrane segment spans residues 192–215 (AFLKIIAVWTISVGVSMPIPVFGL). At 216–232 (QDDSKVFKQGSCLLADD) the chain is on the extracellular side. Residues 233–258 (NFVLIGSFVAFFIPLTIMVITYFLTI) traverse the membrane as a helical segment. Residues 259 to 322 (KSLQKEATLC…QSISNEQKAC (64 aa)) are Cytoplasmic-facing. Ser-280 bears the Phosphoserine mark. The chain crosses the membrane as a helical span at residues 323 to 348 (KVLGIVFFLFVVMWCPFFITNIMAVI). Asn-343 serves as a coordination point for serotonin. Cys-349 and Cys-353 form a disulfide bridge. Topologically, residues 349–356 (CKESCNEH) are extracellular. Residues 357-382 (VIGALLNVFVWIGYLSSAVNPLVYTL) form a helical membrane-spanning segment. Residues 376–380 (NPLVY) carry the NPxxY motif; important for ligand-induced conformation changes and signaling motif. Over 383-471 (FNKTYRSAFS…NTVNEKVSCV (89 aa)) the chain is Cytoplasmic. The PDZ-binding motif lies at 469–471 (SCV).

This sequence belongs to the G-protein coupled receptor 1 family. Interacts (via C-terminus) with MPDZ and PATJ. May interact (via C-terminus) with MPP3, PRDX6, DLG4, DLG1, CASK, APBA1 and MAGI2. Interacts with GRM2 and DRD2; this may affect signaling.

It is found in the cell membrane. Its subcellular location is the cell projection. The protein resides in the dendrite. It localises to the axon. The protein localises to the cytoplasmic vesicle. It is found in the membrane. Its subcellular location is the caveola. The protein resides in the presynapse. With respect to regulation, G-protein coupled receptor activity is regulated by lipids: oleamide increases HTR2A-mediated activity. Functionally, G-protein coupled receptor for 5-hydroxytryptamine (serotonin). Also functions as a receptor for various drugs and psychoactive substances, including mescaline, psilocybin, 1-(2,5-dimethoxy-4-iodophenyl)-2-aminopropane (DOI) and lysergic acid diethylamide (LSD). Ligand binding causes a conformation change that triggers signaling via guanine nucleotide-binding proteins (G proteins) and modulates the activity of downstream effectors. HTR2A is coupled to G(q)/G(11) G alpha proteins and activates phospholipase C-beta, releasing diacylglycerol (DAG) and inositol 1,4,5-trisphosphate (IP3) second messengers that modulate the activity of phosphatidylinositol 3-kinase and promote the release of Ca(2+) ions from intracellular stores, respectively. Beta-arrestin family members inhibit signaling via G proteins and mediate activation of alternative signaling pathways. Affects neural activity, perception, cognition and mood. Plays a role in the regulation of behavior, including responses to anxiogenic situations and psychoactive substances. Plays a role in intestinal smooth muscle contraction, and may play a role in arterial vasoconstriction. In Cricetulus griseus (Chinese hamster), this protein is 5-hydroxytryptamine receptor 2A (HTR2A).